Reading from the N-terminus, the 311-residue chain is tRNA-cytidine(32) 2-sulfurtransferase (311 aa).

The short motif at 47 to 52 is the PP-loop motif element; sequence SGGKDS. [4Fe-4S] cluster is bound by residues Cys-122, Cys-125, and Cys-213.

Belongs to the TtcA family. Homodimer. Mg(2+) serves as cofactor. Requires [4Fe-4S] cluster as cofactor.

The protein resides in the cytoplasm. The catalysed reaction is cytidine(32) in tRNA + S-sulfanyl-L-cysteinyl-[cysteine desulfurase] + AH2 + ATP = 2-thiocytidine(32) in tRNA + L-cysteinyl-[cysteine desulfurase] + A + AMP + diphosphate + H(+). Its pathway is tRNA modification. In terms of biological role, catalyzes the ATP-dependent 2-thiolation of cytidine in position 32 of tRNA, to form 2-thiocytidine (s(2)C32). The sulfur atoms are provided by the cysteine/cysteine desulfurase (IscS) system. This is tRNA-cytidine(32) 2-sulfurtransferase from Escherichia coli (strain K12 / MC4100 / BW2952).